The following is a 299-amino-acid chain: MSSIKIECVLPENCQCGESPVWEEASNSLLFVDIPAKKVCRWDSLTKQVQRVTVDAPVSSVALHRSGDYVATIGTKFCALNWKEQSAVVLATVDNDKKNNRFNDGKVDPAGRYFAGTMAEETAPAVLERHQGALYSLFPDHHVKKYFDQVDISNGLDWSLDHKIFYYIDSLSYSVDAFDYDLQTGQISNRRSVYKLEKEEQIPDGMCIDAEGKLWVACYNGGRVIRLDPVTGKRLHTVKLPVDKTTSCCFGGKNYSEMYVTCARDGMDPEGLLRQPEAGGIFKITGLGVKGIAPYSYAG.

E18 is a binding site for a divalent metal cation. Substrate-binding residues include R101, N103, and E121. Position 144 is an N6-succinyllysine (K144). Positions 154 and 204 each coordinate a divalent metal cation. D204 serves as the catalytic Proton donor/acceptor. Residues K244 and K253 each carry the N6-succinyllysine modification.

Belongs to the SMP-30/CGR1 family. In terms of assembly, monomer. It depends on Zn(2+) as a cofactor. Mn(2+) serves as cofactor. Requires Ca(2+) as cofactor. Mg(2+) is required as a cofactor.

The protein resides in the cytoplasm. It catalyses the reaction D-glucono-1,5-lactone + H2O = D-gluconate + H(+). Gluconolactonase with low activity towards other sugar lactones, including gulonolactone and galactonolactone. Can also hydrolyze diisopropyl phosphorofluoridate and phenylacetate (in vitro). Calcium-binding protein. Modulates Ca(2+) signaling, and Ca(2+)-dependent cellular processes and enzyme activities. This chain is Regucalcin (RGN), found in Pongo abelii (Sumatran orangutan).